Reading from the N-terminus, the 408-residue chain is LL-diaminopimelate aminotransferase (408 aa).

Residues tyrosine 15 and glycine 42 each contribute to the substrate site. Residues tyrosine 72, 108 to 109, tyrosine 132, asparagine 187, tyrosine 218, and 246 to 248 contribute to the pyridoxal 5'-phosphate site; these read SK and SFS. Substrate-binding residues include lysine 109, tyrosine 132, and asparagine 187. Lysine 249 carries the post-translational modification N6-(pyridoxal phosphate)lysine. 2 residues coordinate pyridoxal 5'-phosphate: arginine 257 and asparagine 292. Asparagine 292 and arginine 388 together coordinate substrate.

The protein belongs to the class-I pyridoxal-phosphate-dependent aminotransferase family. LL-diaminopimelate aminotransferase subfamily. Homodimer. It depends on pyridoxal 5'-phosphate as a cofactor.

The enzyme catalyses (2S,6S)-2,6-diaminopimelate + 2-oxoglutarate = (S)-2,3,4,5-tetrahydrodipicolinate + L-glutamate + H2O + H(+). The protein operates within amino-acid biosynthesis; L-lysine biosynthesis via DAP pathway; LL-2,6-diaminopimelate from (S)-tetrahydrodipicolinate (aminotransferase route): step 1/1. Involved in the synthesis of meso-diaminopimelate (m-DAP or DL-DAP), required for both lysine and peptidoglycan biosynthesis. Catalyzes the direct conversion of tetrahydrodipicolinate to LL-diaminopimelate. The chain is LL-diaminopimelate aminotransferase from Leptospira borgpetersenii serovar Hardjo-bovis (strain JB197).